Consider the following 178-residue polypeptide: Probetacellulin (178 aa).

An N-terminal signal peptide occupies residues 1 to 31 (MARAAPGSGASPLPLLPALALGLVILHCVVA). Residues 32 to 118 (DGNSTRSPED…LFYLRGDRGQ (87 aa)) are Extracellular-facing. A glycan (N-linked (GlcNAc...) asparagine) is linked at Asn34. The 41-residue stretch at 65 to 105 (HFSRCPKQYKHYCIKGRCRFVVAEQTPSCVCDEGYAGARCE) folds into the EGF-like domain. 3 disulfides stabilise this stretch: Cys69–Cys82, Cys77–Cys93, and Cys95–Cys104. The propeptide at 112 to 178 (LRGDRGQILV…NDDIQETSIA (67 aa)) is removed in mature form. The helical transmembrane segment at 119 to 139 (ILVICLIAVMVIFIILVVSIC) threads the bilayer. The Cytoplasmic segment spans residues 140–178 (TCCHPLRKRRKRRKKEEEMETLGKDITPINDDIQETSIA).

Monomer. Interacts with EGFR and ERBB4. Expressed in a wide range of tissues, including the mammary gland.

It localises to the secreted. The protein localises to the extracellular space. The protein resides in the cell membrane. Growth factor that binds to EGFR, ERBB4 and other EGF receptor family members. Potent mitogen for retinal pigment epithelial cells and vascular smooth muscle cells. The protein is Probetacellulin (BTC) of Bos taurus (Bovine).